A 143-amino-acid polypeptide reads, in one-letter code: Putative pre-16S rRNA nuclease (143 aa).

The protein belongs to the YqgF nuclease family.

The protein resides in the cytoplasm. Functionally, could be a nuclease involved in processing of the 5'-end of pre-16S rRNA. The protein is Putative pre-16S rRNA nuclease of Lactococcus lactis subsp. cremoris (strain MG1363).